We begin with the raw amino-acid sequence, 141 residues long: Large ribosomal subunit protein uL16 (141 aa).

Residues 1–19 (MLMPKKTKYRKQQKGRNRG) show a composition bias toward basic residues. The interval 1–22 (MLMPKKTKYRKQQKGRNRGKAY) is disordered.

This sequence belongs to the universal ribosomal protein uL16 family. In terms of assembly, part of the 50S ribosomal subunit.

In terms of biological role, binds 23S rRNA and is also seen to make contacts with the A and possibly P site tRNAs. In Nitratiruptor sp. (strain SB155-2), this protein is Large ribosomal subunit protein uL16.